The primary structure comprises 145 residues: 3-dehydroquinate dehydratase (145 aa).

The Proton acceptor role is filled by Y23. The substrate site is built by N75, H81, and D88. H101 serves as the catalytic Proton donor. Substrate is bound by residues 102 to 103 (LS) and R112.

The protein belongs to the type-II 3-dehydroquinase family. Homododecamer.

The catalysed reaction is 3-dehydroquinate = 3-dehydroshikimate + H2O. It participates in metabolic intermediate biosynthesis; chorismate biosynthesis; chorismate from D-erythrose 4-phosphate and phosphoenolpyruvate: step 3/7. Its function is as follows. Catalyzes a trans-dehydration via an enolate intermediate. The polypeptide is 3-dehydroquinate dehydratase (Legionella pneumophila (strain Lens)).